We begin with the raw amino-acid sequence, 667 residues long: MHHQQRMAALGTDKELSDLLDFSAMFSPPVSSGKNGPTSLASGHFTGSNVEDRSSSGSWGNGGHPSPSRNYGDGTPYDHMTSRDLGSHDNLSPPFVNSRIQSKTERGSYSSYGRESNLQGCHQQSLLGGDMDMGNPGTLSPTKPGSQYYQYSSNNPRRRPLHSSAMEVQTKKVRKVPPGLPSSVYAPSASTADYNRDSPGYPSSKPATSTFPSSFFMQDGHHSSDPWSSSSGMNQPGYAGMLGNSSHIPQSSSYCSLHPHERLSYPSHSSADINSSLPPMSTFHRSGTNHYSTSSCTPPANGTDSIMANRGSGAAGSSQTGDALGKALASIYSPDHTNNSFSSNPSTPVGSPPSLSAGTAVWSRNGGQASSSPNYEGPLHSLQSRIEDRLERLDDAIHVLRNHAVGPSTAMPGGHGDMHGIIGPSHNGAMGGLGSGYGTGLLSANRHSLMVGTHREDGVALRGSHSLLPNQVPVPQLPVQSATSPDLNPPQDPYRGMPPGLQGQSVSSGSSEIKSDDEGDENLQDTKSSEDKKLDDDKKDIKSITSNNDDEDLTPEQKAEREKERRMANNARERLRVRDINEAFKELGRMVQLHLKSDKPQTKLLILHQAVAVILSLEQQVRERNLNPKAACLKRREEEKVSSEPPPLSLAGPHPGMGDASNHMGQM.

Residues 1–83 are essential for MYOD1 inhibition; that stretch reads MHHQQRMAAL…GTPYDHMTSR (83 aa). The 9aaTAD motif lies at 18–26; it reads DLLDFSAMF. 5 disordered regions span residues 24 to 245, 263 to 321, 336 to 379, 466 to 570, and 634 to 667; these read AMFS…LGNS, LSYP…SQTG, HTNN…EGPL, SLLP…MANN, and KRREEEKVSSEPPPLSLAGPHPGMGDASNHMGQM. The span at 29–49 shows a compositional bias: polar residues; sequence PVSSGKNGPTSLASGHFTGSN. A phosphoserine mark is found at serine 66, serine 87, and serine 92. 4 stretches are compositionally biased toward polar residues: residues 107 to 126, 137 to 155, 205 to 216, and 266 to 306; these read GSYSSYGRESNLQGCHQQSL, GTLSPTKPGSQYYQYSSNN, KPATSTFPSSFF, and PSHS…TDSI. Positions 337 to 348 are enriched in low complexity; the sequence is TNNSFSSNPSTP. Over residues 365–374 the composition is skewed to polar residues; it reads NGGQASSSPN. Serine 372 bears the Phosphoserine mark. A leucine-zipper region spans residues 379–400; sequence LHSLQSRIEDRLERLDDAIHVL. Composition is skewed to low complexity over residues 467 to 480 and 503 to 512; these read LLPNQVPVPQLPVQ and GQSVSSGSSE. Serine 515 carries the post-translational modification Phosphoserine. 2 stretches are compositionally biased toward basic and acidic residues: residues 527 to 542 and 555 to 570; these read KSSEDKKLDDDKKDIK and PEQKAEREKERRMANN. The bHLH domain maps to 564–617; sequence ERRMANNARERLRVRDINEAFKELGRMVQLHLKSDKPQTKLLILHQAVAVILSL. Residues 619–642 are class A specific domain; that stretch reads QQVRERNLNPKAACLKRREEEKVS.

As to quaternary structure, efficient DNA binding requires dimerization with another bHLH protein. Forms homo- or heterooligomers with myogenin. Interacts with HIVEP2. Interacts with NEUROD2. Interacts with AGBL1. Interacts with BHLHA9. Expressed in adult heart, brain, placenta, skeletal muscle and to a lesser extent in the lung. In developing embryonic tissues, expression mostly occurs in the brain.

Its subcellular location is the nucleus. Functionally, transcription factor that binds to the immunoglobulin enhancer Mu-E5/KE5-motif. Involved in the initiation of neuronal differentiation. Activates transcription by binding to the E box (5'-CANNTG-3'). Binds to the E-box present in the somatostatin receptor 2 initiator element (SSTR2-INR) to activate transcription. Preferentially binds to either 5'-ACANNTGT-3' or 5'-CCANNTGG-3'. The sequence is that of Transcription factor 4 (TCF4) from Homo sapiens (Human).